The primary structure comprises 266 residues: Methyl-coenzyme M reductase II subunit gamma (266 aa).

Arg123 is a coenzyme M binding site.

The protein belongs to the methyl-coenzyme M reductase gamma subunit family. In terms of assembly, MCR is a hexamer of two alpha, two beta, and two gamma chains, forming a dimer of heterotrimers. Coenzyme F430 serves as cofactor.

It carries out the reaction coenzyme B + methyl-coenzyme M = methane + coenzyme M-coenzyme B heterodisulfide. The protein operates within one-carbon metabolism; methyl-coenzyme M reduction; methane from methyl-coenzyme M: step 1/1. Component of the methyl-coenzyme M reductase (MCR) I that catalyzes the reductive cleavage of methyl-coenzyme M (CoM-S-CH3 or 2-(methylthio)ethanesulfonate) using coenzyme B (CoB or 7-mercaptoheptanoylthreonine phosphate) as reductant which results in the production of methane and the mixed heterodisulfide of CoB and CoM (CoM-S-S-CoB). This is the final step in methanogenesis. The sequence is that of Methyl-coenzyme M reductase II subunit gamma (mrtG) from Methanocaldococcus jannaschii (strain ATCC 43067 / DSM 2661 / JAL-1 / JCM 10045 / NBRC 100440) (Methanococcus jannaschii).